The following is a 680-amino-acid chain: MKHFLSLALCFSSINAVAVTVPHKSGGTGSPEGSLQFLSLRASAPIGSAISRNNWAVTCDSAQSGNECNKAIDGNKDTFWHTFYGANGDPKPPHTYTIDMKTTQNVNGLSMLPRQDGNQNGWIGRHEVYLSSDGTNWGSPVASGSWFADSTTKYSNFETRPARYVRLVAVTEANGQPWTSIAEINVFQASSYTAPQPGLGRWGPTIDLPIVPAAAAIEPTSGRVLMWSSYRNDAFGGSPGGITLTSSWDPSTGIVSDRTVTVTKHDMFCPGISMDGNGQIVVTGGNDAKKTSLYDSSSDSWIPGPDMQVARGYQSSATMSDGRVFTIGGSWSGGVFEKNGEVYSPSSKTWTSLPNAKVNPMLTADKQGLYRSDNHAWLFGWKKGSVFQAGPSTAMNWYYTSGSGDVKSAGKRQSNRGVAPDAMCGNAVMYDAVKGKILTFGGSPDYQDSDATTNAHIITLGEPGTSPNTVFASNGLYFARTFHTSVVLPDGSTFITGGQRRGIPFEDSTPVFTPEIYVPEQDTFYKQNPNSIVRVYHSISLLLPDGRVFNGGGGLCGDCTTNHFDAQIFTPNYLYNSNGNLATRPKITRTSTQSVKVGGRITISTDSSITKASLIRYGTATHTVNTDQRRIPLTLTNNGGNSYSFQVPSDSGVALPGYWMLFVMNSAGVPSVASTIRVTQ.

The N-terminal stretch at 1-24 (MKHFLSLALCFSSINAVAVTVPHK) is a signal peptide. Positions 25–41 (SGGTGSPEGSLQFLSLR) are excised as a propeptide. In terms of domain architecture, F5/8 type C spans 42-189 (ASAPIGSAIS…SIAEINVFQA (148 aa)). Cys59 and Cys68 are oxidised to a cystine. Kelch repeat units lie at residues 223–268 (RVLM…HDMF), 279–321 (QIVV…TMSD), 323–372 (RVFT…LYRS), 436–490 (KILT…VLPD), and 492–544 (STFI…LLLP). The 3'-(S-cysteinyl)-tyrosine (Cys-Tyr) cross-link spans 269–313 (CPGISMDGNGQIVVTGGNDAKKTSLYDSSSDSWIPGPDMQVARGY). Cu cation is bound at residue Tyr313. Tyr536 and His537 together coordinate Cu cation. Tyr536 (proton acceptor) is an active-site residue. A disulfide bridge links Cys556 with Cys559. Position 622 (His622) interacts with Cu cation.

In terms of assembly, monomer. Cu(2+) is required as a cofactor. Galactose oxidase contains a protein-derived free radical cofactor. In the active state, Tyr-313, which is cross-linked to Cys-269 via a thioether bond, is oxidized to a radical and acts with Cu(2+) as a two-electron acceptor in the oxidation reaction. The cross-link is believed to modulate the redox potential of the tyrosyl radical, which is further stabilized by a stacking interaction with Trp-331 in the active site. The post-translational formation of the cross-link is closely linked to the propeptide cleavage event, and both are copper-dependent, autocatalytic processes. The propeptide may act as an intramolecular chaperone, facilitating thioester bond formation and copper binding by positioning of active-site residues, including copper ligands.

The protein resides in the secreted. It catalyses the reaction D-galactose + O2 = D-galacto-hexodialdose + H2O2. Catalyzes the sterospecific oxidation of primary alcohols to the corresponding aldehydes. The biologically relevant substrate of the enzyme is not known as the enzyme exhibits broad substrate specificity from small alcohols through sugars to oligo- and polysaccharides. This Gibberella zeae (strain ATCC MYA-4620 / CBS 123657 / FGSC 9075 / NRRL 31084 / PH-1) (Wheat head blight fungus) protein is Galactose oxidase (GAOA).